The following is a 349-amino-acid chain: MAREKRKLEHIEYALSTGQSRTHGFCDIEFVHKSLPNSSFESVTCETKIGELSLSSPIFINAMTGGGGERTLHINEQLAYVAKHHHLAMAVGSQMAALKEKREVDSYRIVRRVNPNGIVFANLGSEATVEQAKCAVDMIEANALQIHLNVIQELTMPEGDRDFKGVLKRIENIVLTSEVPVIVKEVGFGMSKETVQQLANIGVTAIDIGGQGGTNFAAVENERRNRMLSYFNDWGIQTASSIIEASSTNNTLSLIASGGIQTALDVAKAIALGAQATAFAGYFLRILMNEGMDTLIEEVELLHTDLRFIMTALGAKNILELQQVPLVVKGDTYHWLTQRGIDTMYYSQR.

Arg6 to Lys7 contacts substrate. FMN-binding positions include Ala62–Thr64, Ser93, and Asn122. Gln152 is a binding site for substrate. Glu153 lines the Mg(2+) pocket. Residues Lys184, Thr214, Gly258 to Gly259, and Ala280 to Gly281 each bind FMN.

This sequence belongs to the IPP isomerase type 2 family. As to quaternary structure, homooctamer. Dimer of tetramers. It depends on FMN as a cofactor. NADPH serves as cofactor. Mg(2+) is required as a cofactor.

The protein localises to the cytoplasm. It carries out the reaction isopentenyl diphosphate = dimethylallyl diphosphate. Involved in the biosynthesis of isoprenoids. Catalyzes the 1,3-allylic rearrangement of the homoallylic substrate isopentenyl (IPP) to its allylic isomer, dimethylallyl diphosphate (DMAPP). This Bacillus cytotoxicus (strain DSM 22905 / CIP 110041 / 391-98 / NVH 391-98) protein is Isopentenyl-diphosphate delta-isomerase.